A 289-amino-acid chain; its full sequence is MGEKRNRNGKDANSQNRKKFKVSSGFLDPGTSGIYATCSRRHERQAAQELQLLFEEKFQELYGDIKEGEDESENDEKKDLSIEDQIKKELQELKGEETGKDLSSGETKKKDPLAFIDLNCECVTFCKTRKPIVPEEFVLSIMKDLADPKNMVKRTRYVQKLTPITYSCNAKMEQLIKLANLVIGPHFHDPSNVKKNYKFAVEVTRRNFNTIERMDIINQVVKLVNKEGSEFNHTVDLKNYDKLILVECFKSNIGMCVVDGDYKTKYRKYNVQQLYESKFRKDEDKSVKQ.

The span at 1-10 shows a compositional bias: basic and acidic residues; sequence MGEKRNRNGK. 2 disordered regions span residues 1-31 and 64-83; these read MGEK…DPGT and DIKE…LSIE. Position 72 is a phosphoserine (Ser72). The region spanning 146–259 is the THUMP domain; the sequence is ADPKNMVKRT…KSNIGMCVVD (114 aa).

The protein resides in the cytoplasm. Its subcellular location is the nucleus. In terms of biological role, probable tRNA acetyltransferase required for the formation of the modified nucleoside N(4)-acetylcytidine in serine and leucine tRNAs. Binds RNA. The polypeptide is tRNA acetyltransferase TAN1 (TAN1) (Saccharomyces cerevisiae (strain ATCC 204508 / S288c) (Baker's yeast)).